The primary structure comprises 223 residues: Deoxyribose-phosphate aldolase (223 aa).

The active-site Proton donor/acceptor is the D92. The active-site Schiff-base intermediate with acetaldehyde is the K154. K182 serves as the catalytic Proton donor/acceptor.

It belongs to the DeoC/FbaB aldolase family. DeoC type 1 subfamily.

Its subcellular location is the cytoplasm. It catalyses the reaction 2-deoxy-D-ribose 5-phosphate = D-glyceraldehyde 3-phosphate + acetaldehyde. It functions in the pathway carbohydrate degradation; 2-deoxy-D-ribose 1-phosphate degradation; D-glyceraldehyde 3-phosphate and acetaldehyde from 2-deoxy-alpha-D-ribose 1-phosphate: step 2/2. In terms of biological role, catalyzes a reversible aldol reaction between acetaldehyde and D-glyceraldehyde 3-phosphate to generate 2-deoxy-D-ribose 5-phosphate. The polypeptide is Deoxyribose-phosphate aldolase (Haemophilus influenzae (strain PittEE)).